A 380-amino-acid polypeptide reads, in one-letter code: Mitogen-activated protein kinase 3 (380 aa).

Alanine 2 bears the N-acetylalanine mark. The Protein kinase domain occupies 43-331 (YTQLQYIGEG…VEEALAHPYL (289 aa)). Residues 49 to 57 (IGEGAYGMV) and lysine 72 each bind ATP. Aspartate 167 acts as the Proton acceptor in catalysis. Threonine 199 is modified (phosphothreonine). Position 203 is a phosphothreonine; by MAP2K1 and MAP2K2 (threonine 203). Positions 203–205 (TEY) match the TXY motif. Position 205 is a phosphotyrosine; by MAP2K1 and MAP2K2 (tyrosine 205). At threonine 208 the chain carries Phosphothreonine; by autocatalysis.

Belongs to the protein kinase superfamily. CMGC Ser/Thr protein kinase family. MAP kinase subfamily. In terms of assembly, binds both upstream activators and downstream substrates in multimolecular complexes. Found in a complex with at least BRAF, HRAS, MAP2K1/MEK1, MAPK3 and RGS14. Interacts with TPR. Interacts with ADAM15, ARRB2, CANX, DAPK1 (via death domain), HSF4, IER3, MAP2K1/MEK1, NISCH, and SGK1. Interacts with MORG1. Interacts with PEA15. Interacts with isoform 1 of MKNK2 and this binding prevents from dephosphorylation and inactivation. Interacts with CDKN2AIP. Interacts with HSF1 (via D domain and preferentially with hyperphosphorylated form); this interaction occurs upon heat shock. Interacts with CAVIN4. Interacts with GIT1; this interaction is necessary for MAPK3 localization to focal adhesions. Interacts with ZNF263. Interacts with EBF4. The cofactor is Mg(2+). Dually phosphorylated on Thr-203 and Tyr-205, which activates the enzyme. Ligand-activated ALK induces tyrosine phosphorylation. Dephosphorylated by PTPRJ at Tyr-205. Autophosphorylated on threonine and tyrosine residues in vitro. Phosphorylated upon FLT3 and KIT signaling. Post-translationally, ubiquitinated by TRIM15 via 'Lys-63'-linked ubiquitination; leading to activation. Deubiquitinated by CYLD.

The protein localises to the cytoplasm. Its subcellular location is the nucleus. The protein resides in the membrane. It localises to the caveola. It is found in the cell junction. The protein localises to the focal adhesion. It carries out the reaction L-seryl-[protein] + ATP = O-phospho-L-seryl-[protein] + ADP + H(+). It catalyses the reaction L-threonyl-[protein] + ATP = O-phospho-L-threonyl-[protein] + ADP + H(+). With respect to regulation, phosphorylated by MAP2K1/MEK1 and MAP2K2/MEK2 on Thr-203 and Tyr-205 in response to external stimuli like insulin or NGF. Both phosphorylations are required for activity. This phosphorylation causes dramatic conformational changes, which enable full activation and interaction of MAPK1/ERK2 with its substrates. Dephosphorylated and inactivated by DUSP3, DUSP6 and DUSP9. Functionally, serine/threonine kinase which acts as an essential component of the MAP kinase signal transduction pathway. MAPK1/ERK2 and MAPK3/ERK1 are the 2 MAPKs which play an important role in the MAPK/ERK cascade. They participate also in a signaling cascade initiated by activated KIT and KITLG/SCF. Depending on the cellular context, the MAPK/ERK cascade mediates diverse biological functions such as cell growth, adhesion, survival and differentiation through the regulation of transcription, translation, cytoskeletal rearrangements. The MAPK/ERK cascade also plays a role in initiation and regulation of meiosis, mitosis, and postmitotic functions in differentiated cells by phosphorylating a number of transcription factors. About 160 substrates have already been discovered for ERKs. Many of these substrates are localized in the nucleus, and seem to participate in the regulation of transcription upon stimulation. However, other substrates are found in the cytosol as well as in other cellular organelles, and those are responsible for processes such as translation, mitosis and apoptosis. Moreover, the MAPK/ERK cascade is also involved in the regulation of the endosomal dynamics, including lysosome processing and endosome cycling through the perinuclear recycling compartment (PNRC); as well as in the fragmentation of the Golgi apparatus during mitosis. The substrates include transcription factors (such as ATF2, BCL6, ELK1, ERF, FOS, HSF4 or SPZ1), cytoskeletal elements (such as CANX, CTTN, GJA1, MAP2, MAPT, PXN, SORBS3 or STMN1), regulators of apoptosis (such as BAD, BTG2, CASP9, DAPK1, IER3, MCL1 or PPARG), regulators of translation (such as EIF4EBP1) and a variety of other signaling-related molecules (like ARHGEF2, DEPTOR, FRS2 or GRB10). Protein kinases (such as RAF1, RPS6KA1/RSK1, RPS6KA3/RSK2, RPS6KA2/RSK3, RPS6KA6/RSK4, SYK, MKNK1/MNK1, MKNK2/MNK2, RPS6KA5/MSK1, RPS6KA4/MSK2, MAPKAPK3 or MAPKAPK5) and phosphatases (such as DUSP1, DUSP4, DUSP6 or DUSP16) are other substrates which enable the propagation the MAPK/ERK signal to additional cytosolic and nuclear targets, thereby extending the specificity of the cascade. This Mus musculus (Mouse) protein is Mitogen-activated protein kinase 3 (Mapk3).